The sequence spans 645 residues: Rab11 family-interacting protein 1 (645 aa).

The C2 domain maps to 1–128; the sequence is MSLAASAGRG…DQGRRKKQWY (128 aa). Residues 171 to 187 show a composition bias toward basic and acidic residues; it reads PFGKLKDKIKGKNKDSA. The disordered stretch occupies residues 171–215; that stretch reads PFGKLKDKIKGKNKDSASDTASAIVPSVTPSVDSDDESFSKDKKK. Phosphoserine occurs at positions 186, 204, 208, and 236. Residues 259–296 form a disordered region; it reads WDDDAHEDESSSASDVMSHKRTSSTDQQPNQSNFSLPK. Positions 282 to 293 are enriched in polar residues; it reads STDQQPNQSNFS. Phosphoserine is present on residues serine 301, serine 316, serine 340, serine 342, serine 344, serine 346, serine 357, serine 358, and serine 383. The disordered stretch occupies residues 330-545; sequence PEARSEIRES…PRPHPVKPMN (216 aa). Composition is skewed to basic and acidic residues over residues 378-391 and 418-432; these read SDRR…KDSM and AARE…ESKK. Serine 434 is subject to Phosphoserine. A compositionally biased stretch (basic and acidic residues) spans 459–487; the sequence is SEKEKERKGALVEAQLREEDLMRRPEKDA. The FIP-RBD domain maps to 573–635; the sequence is KKYQPSDPAF…EETPNILRVP (63 aa). Positions 581 to 645 are necessary for interaction with RAB4A and RAB11A, subcellular location and endosomal recycling; that stretch reads AFAYAQLTHD…AQMGKKAGKM (65 aa).

Homooligomer. Interacts with RAB11A, RAB11B, RAB25, RAB4A and RAB14.

Its subcellular location is the recycling endosome. The protein resides in the cytoplasmic vesicle. Functionally, a Rab11 effector protein involved in the endosomal recycling process. Also involved in controlling membrane trafficking along the phagocytic pathway and in phagocytosis. Interaction with RAB14 may function in the process of neurite formation. In Mus musculus (Mouse), this protein is Rab11 family-interacting protein 1 (Rab11fip1).